We begin with the raw amino-acid sequence, 577 residues long: Arginine--tRNA ligase (577 aa).

The 'HIGH' region motif lies at 122 to 132 (PNVAKEMHVGH).

Belongs to the class-I aminoacyl-tRNA synthetase family. As to quaternary structure, monomer.

It localises to the cytoplasm. The catalysed reaction is tRNA(Arg) + L-arginine + ATP = L-arginyl-tRNA(Arg) + AMP + diphosphate. In Salmonella typhimurium (strain SL1344), this protein is Arginine--tRNA ligase (argS).